Here is a 357-residue protein sequence, read N- to C-terminus: UDP-N-acetylglucosamine--N-acetylmuramyl-(pentapeptide) pyrophosphoryl-undecaprenol N-acetylglucosamine transferase (357 aa).

Residues 10-12 (TGG), N124, S189, I244, and Q289 each bind UDP-N-acetyl-alpha-D-glucosamine.

This sequence belongs to the glycosyltransferase 28 family. MurG subfamily.

It localises to the cell membrane. It catalyses the reaction Mur2Ac(oyl-L-Ala-gamma-D-Glu-L-Lys-D-Ala-D-Ala)-di-trans,octa-cis-undecaprenyl diphosphate + UDP-N-acetyl-alpha-D-glucosamine = beta-D-GlcNAc-(1-&gt;4)-Mur2Ac(oyl-L-Ala-gamma-D-Glu-L-Lys-D-Ala-D-Ala)-di-trans,octa-cis-undecaprenyl diphosphate + UDP + H(+). It functions in the pathway cell wall biogenesis; peptidoglycan biosynthesis. Its function is as follows. Cell wall formation. Catalyzes the transfer of a GlcNAc subunit on undecaprenyl-pyrophosphoryl-MurNAc-pentapeptide (lipid intermediate I) to form undecaprenyl-pyrophosphoryl-MurNAc-(pentapeptide)GlcNAc (lipid intermediate II). In Lactococcus lactis subsp. lactis (strain IL1403) (Streptococcus lactis), this protein is UDP-N-acetylglucosamine--N-acetylmuramyl-(pentapeptide) pyrophosphoryl-undecaprenol N-acetylglucosamine transferase.